A 53-amino-acid polypeptide reads, in one-letter code: uncharacterized protein (53 aa).

The signal sequence occupies residues 1–19; that stretch reads MKLLTILILFYSFFMNLQA.

This is an uncharacterized protein from Autographa californica nuclear polyhedrosis virus (AcMNPV).